The following is a 190-amino-acid chain: Homeobox protein SEBOX (190 aa).

A compositionally biased stretch (low complexity) spans 1–11 (MPSPVDASSAD). Disordered regions lie at residues 1 to 24 (MPSP…RKRT) and 82 to 161 (ILSP…VHPS). The segment at residues 19–78 (HRRKRTTFSKGQLLELERAFAAWPYPNISTHEHLAWVTCLPEAKVQVWFQKRWAKIIKNR) is a DNA-binding region (homeobox). The span at 89–100 (CPQSSCSLPDTL) shows a compositional bias: polar residues.

The protein belongs to the paired homeobox family.

The protein localises to the nucleus. Its function is as follows. Probable transcription factor involved in the control of specification of mesoderm and endoderm. The polypeptide is Homeobox protein SEBOX (SEBOX) (Homo sapiens (Human)).